Reading from the N-terminus, the 331-residue chain is Protein RecA (331 aa).

66-73 (GPESSGKT) serves as a coordination point for ATP.

This sequence belongs to the RecA family.

Its subcellular location is the cytoplasm. Can catalyze the hydrolysis of ATP in the presence of single-stranded DNA, the ATP-dependent uptake of single-stranded DNA by duplex DNA, and the ATP-dependent hybridization of homologous single-stranded DNAs. It interacts with LexA causing its activation and leading to its autocatalytic cleavage. The chain is Protein RecA from Acholeplasma laidlawii.